A 288-amino-acid polypeptide reads, in one-letter code: Glandicoline B O-methyltransferase roqN (288 aa).

S-adenosyl-L-methionine is bound by residues Thr57, Asp82, and 109–110 (DA).

Belongs to the class I-like SAM-binding methyltransferase superfamily.

The enzyme catalyses glandicoline B + S-adenosyl-L-methionine = meleagrin + S-adenosyl-L-homocysteine + H(+). The protein operates within alkaloid biosynthesis. In terms of biological role, glandicoline B O-methyltransferase; part of the gene cluster that mediates the biosynthesis of the mycotoxin meleagrin. The first stage is catalyzed by the dipeptide synthase roqA which condenses histidine and tryptophan to produce histidyltryptophanyldiketopiperazine (HTD). HTD is then converted to roquefortine C through two possible pathways. In the first pathway, prenyltransferase roqD transforms HTD to the intermediate roquefortine D, which is in turn converted to roquefortine C by the cytochrome P450 monooxygenase roqR. In the second pathway, HTD is first converted to the intermediate dehydrohistidyltryptophanyldi-ketopiperazine (DHTD) by roqR which is then prenylated by roqD to form roquefortine C. Roquefortine C can be further transformed to meleagrin via three more reactions including oxydation to glandicolin A by roqM, which is further reduced to glandicoline B by roqO. Finally, glandicoline B is converted to meleagrin by the glandicoline B O-methyltransferase roqN. More studies identified further branching and additional metabolites produced by the roquefortine/meleagrin cluster, including roquefortine F, roquefortine L, roquefortine M, roquefortine N and neoxaline. The polypeptide is Glandicoline B O-methyltransferase roqN (Penicillium rubens (strain ATCC 28089 / DSM 1075 / NRRL 1951 / Wisconsin 54-1255) (Penicillium chrysogenum)).